We begin with the raw amino-acid sequence, 374 residues long: MNFNKLKFGATIGIIGGGQLGKMMAQSAQKMGYKVVVLDPSEDCPCRYVAHEFIQAKYDDEKALNQLGQKCDVITYEFENISAQQLKLLCEKYNIPQGYQAIQLLQDRLTEKETLKSAGTKVVPFISVKESTDIDKAIETLGYPFIVKTRFGGYDGKGQVLINNEKDLQEGFKLIETSECVAEKYLNIKKEVSLTVTRGNNNQITFFPLQENEHRNQILFKTIVPARIDKTAEAKEQVNKIIQSIHFIGTFTVEFFIDSNNQLYVNEIAPRPHNSGHYSIEACDYSQFDTHILAVTGQSLPNSIELLKPAVMMNLLGKDLDLLENEFNEHPEWHLHIYGKSERKDSRKMGHMTVLTNDVNQTEQDMYAKFEGSN.

ATP-binding positions include Arg108, Lys148, 153–159, 183–186, Glu191, His214, and 266–267; these read GYDGKGQ, EKYL, and NE. The ATP-grasp domain maps to 112 to 296; sequence KETLKSAGTK…QFDTHILAVT (185 aa).

It belongs to the PurK/PurT family. In terms of assembly, homodimer.

It carries out the reaction 5-amino-1-(5-phospho-beta-D-ribosyl)imidazole + hydrogencarbonate + ATP = 5-carboxyamino-1-(5-phospho-D-ribosyl)imidazole + ADP + phosphate + 2 H(+). It participates in purine metabolism; IMP biosynthesis via de novo pathway; 5-amino-1-(5-phospho-D-ribosyl)imidazole-4-carboxylate from 5-amino-1-(5-phospho-D-ribosyl)imidazole (N5-CAIR route): step 1/2. Functionally, catalyzes the ATP-dependent conversion of 5-aminoimidazole ribonucleotide (AIR) and HCO(3)(-) to N5-carboxyaminoimidazole ribonucleotide (N5-CAIR). The polypeptide is N5-carboxyaminoimidazole ribonucleotide synthase (Staphylococcus aureus (strain COL)).